The chain runs to 120 residues: UPF0295 protein Aflv_0370 (120 aa).

A run of 2 helical transmembrane segments spans residues 12–32 and 42–62; these read IRTFALSLIFIGFFVMYGGIF and LFMILGLLFIIASTVVYFWIG.

It belongs to the UPF0295 family.

The protein resides in the cell membrane. This Anoxybacillus flavithermus (strain DSM 21510 / WK1) protein is UPF0295 protein Aflv_0370.